Consider the following 570-residue polypeptide: Formate--tetrahydrofolate ligase (570 aa).

Residue 65 to 72 (TPFGEGKT) participates in ATP binding.

This sequence belongs to the formate--tetrahydrofolate ligase family.

It catalyses the reaction (6S)-5,6,7,8-tetrahydrofolate + formate + ATP = (6R)-10-formyltetrahydrofolate + ADP + phosphate. Its pathway is one-carbon metabolism; tetrahydrofolate interconversion. The chain is Formate--tetrahydrofolate ligase from Shewanella halifaxensis (strain HAW-EB4).